Here is a 358-residue protein sequence, read N- to C-terminus: UDP-N-acetylglucosamine--N-acetylmuramyl-(pentapeptide) pyrophosphoryl-undecaprenol N-acetylglucosamine transferase (358 aa).

UDP-N-acetyl-alpha-D-glucosamine contacts are provided by residues 11–13, asparagine 120, arginine 161, serine 188, and glutamine 282; that span reads TGG.

It belongs to the glycosyltransferase 28 family. MurG subfamily.

It localises to the cell inner membrane. It catalyses the reaction di-trans,octa-cis-undecaprenyl diphospho-N-acetyl-alpha-D-muramoyl-L-alanyl-D-glutamyl-meso-2,6-diaminopimeloyl-D-alanyl-D-alanine + UDP-N-acetyl-alpha-D-glucosamine = di-trans,octa-cis-undecaprenyl diphospho-[N-acetyl-alpha-D-glucosaminyl-(1-&gt;4)]-N-acetyl-alpha-D-muramoyl-L-alanyl-D-glutamyl-meso-2,6-diaminopimeloyl-D-alanyl-D-alanine + UDP + H(+). The protein operates within cell wall biogenesis; peptidoglycan biosynthesis. Its function is as follows. Cell wall formation. Catalyzes the transfer of a GlcNAc subunit on undecaprenyl-pyrophosphoryl-MurNAc-pentapeptide (lipid intermediate I) to form undecaprenyl-pyrophosphoryl-MurNAc-(pentapeptide)GlcNAc (lipid intermediate II). The chain is UDP-N-acetylglucosamine--N-acetylmuramyl-(pentapeptide) pyrophosphoryl-undecaprenol N-acetylglucosamine transferase from Synechococcus sp. (strain CC9311).